Reading from the N-terminus, the 143-residue chain is Nucleoside diphosphate kinase (143 aa).

6 residues coordinate ATP: Lys-11, Phe-59, Arg-87, Thr-93, Arg-104, and Asn-114. Catalysis depends on His-117, which acts as the Pros-phosphohistidine intermediate.

It belongs to the NDK family. In terms of assembly, homotetramer. Mg(2+) is required as a cofactor.

Its subcellular location is the cytoplasm. It catalyses the reaction a 2'-deoxyribonucleoside 5'-diphosphate + ATP = a 2'-deoxyribonucleoside 5'-triphosphate + ADP. It carries out the reaction a ribonucleoside 5'-diphosphate + ATP = a ribonucleoside 5'-triphosphate + ADP. Major role in the synthesis of nucleoside triphosphates other than ATP. The ATP gamma phosphate is transferred to the NDP beta phosphate via a ping-pong mechanism, using a phosphorylated active-site intermediate. The polypeptide is Nucleoside diphosphate kinase (Edwardsiella ictaluri (strain 93-146)).